Here is a 64-residue protein sequence, read N- to C-terminus: Sulfur carrier protein ThiS (64 aa).

A 1-thioglycine; alternate modification is found at G64. G64 carries the post-translational modification Glycyl adenylate; alternate. Residue G64 forms a Glycyl cysteine thioester (Gly-Cys) (interchain with C-192 in TtuC); alternate linkage.

Belongs to the sulfur carrier protein ThiS family. In terms of processing, C-terminal thiocarboxylation occurs in 2 steps, it is first acyl-adenylated (-COAMP) by TtuC, then thiocarboxylated (-COSH) by the cysteine desulfurases IscS or SufS.

The protein operates within cofactor biosynthesis; thiamine diphosphate biosynthesis. Is the sulfur donor in the synthesis of the thiazole phosphate moiety of thiamine phosphate. In Thermus thermophilus (strain ATCC BAA-163 / DSM 7039 / HB27), this protein is Sulfur carrier protein ThiS.